Here is a 510-residue protein sequence, read N- to C-terminus: Maturase K (510 aa).

Belongs to the intron maturase 2 family. MatK subfamily.

It localises to the plastid. It is found in the chloroplast. Functionally, usually encoded in the trnK tRNA gene intron. Probably assists in splicing its own and other chloroplast group II introns. This Grahamia bracteata protein is Maturase K.